The sequence spans 177 residues: Parathyroid hormone-related protein (177 aa).

The N-terminal stretch at 1–24 (MLRRLVQQWSVLVFLLSYSVPSRG) is a signal peptide. A propeptide spanning residues 25-34 (RSVEGLGRRL) is cleaved from the precursor. Residues 57–68 (RFFLHHLIAEIH) form an important for receptor binding region. Residues 74 to 177 (ATSEVSPNSK…TSLEPSSRTH (104 aa)) are disordered. Polar residues predominate over residues 76 to 90 (SEVSPNSKPAPNTKN). Residues 108 to 129 (TNKVETYKEQPLKTPGKKKKGK) carry the Nuclear localization signal motif. Positions 109–118 (NKVETYKEQP) are enriched in basic and acidic residues. Residues 122-132 (PGKKKKGKPGK) are compositionally biased toward basic residues. Residues 161–177 (PHTSPTSTSLEPSSRTH) show a composition bias toward low complexity.

The protein belongs to the parathyroid hormone family. In terms of assembly, PTHrP interacts with PTH1R (via N-terminal extracellular domain). There are several secretory forms, including osteostatin, arising from endoproteolytic cleavage of the initial translation product. Each of these secretory forms is believed to have one or more of its own receptors that mediates the normal paracrine, autocrine and endocrine actions.

The protein localises to the secreted. It localises to the cytoplasm. Its subcellular location is the nucleus. In terms of biological role, neuroendocrine peptide which is a critical regulator of cellular and organ growth, development, migration, differentiation and survival and of epithelial calcium ion transport. Acts by binding to its receptor, PTH1R, activating G protein-coupled receptor signaling. Regulates endochondral bone development and epithelial-mesenchymal interactions during the formation of the mammary glands and teeth. Required for skeletal homeostasis. Promotes mammary mesenchyme differentiation and bud outgrowth by modulating mesenchymal cell responsiveness to BMPs. Up-regulates BMPR1A expression in the mammary mesenchyme and this increases the sensitivity of these cells to BMPs and allows them to respond to BMP4 in a paracrine and/or autocrine fashion. BMP4 signaling in the mesenchyme, in turn, triggers epithelial outgrowth and augments MSX2 expression, which causes the mammary mesenchyme to inhibit hair follicle formation within the nipple sheath. Potent inhibitor of osteoclastic bone resorption. This Rattus norvegicus (Rat) protein is Parathyroid hormone-related protein (Pthlh).